The chain runs to 316 residues: Beta-agarase (316 aa).

The N-terminal stretch at 1–18 (MKRKLFTICLASLQFACA) is a signal peptide. Positions 27–315 (YEWDIYPVPA…WIRVYTLVPE (289 aa)) constitute a GH16 domain. Substrate is bound by residues Trp78, 87-97 (QRDHVSVSDGF), and 101-103 (RAS). Residue Glu167 is the Nucleophile of the active site. The active-site Proton donor is Glu172. Residue Arg197 participates in substrate binding.

It belongs to the glycosyl hydrolase 16 family.

The enzyme catalyses Hydrolysis of (1-&gt;4)-beta-D-galactosidic linkages in agarose, giving the tetramer as the predominant product.. Functionally, cleaves the beta-1,4-linkages between beta-D-galactose and alpha-L-3,6-anhydro-galactose residues in agarose. Cleaves agarose in a random manner with retention of the anomeric-bond configuration, producing beta-anomers that give rise progressively to alpha-anomers when mutarotation takes place. The polypeptide is Beta-agarase (Phocaeicola plebeius (strain DSM 17135 / JCM 12973 / CCUG 54634 / M2) (Bacteroides plebeius)).